The primary structure comprises 116 residues: Methionine-R-sulfoxide reductase B1 (116 aa).

The 106-residue stretch at 1 to 106 (MSFCSFFGGE…FSSSLKFIPK (106 aa)) folds into the MsrB domain. Zn(2+) contacts are provided by Cys-23, Cys-26, Cys-71, and Cys-74. The active-site Nucleophile is the Sec-95. Position 95 (Sec-95) is a non-standard amino acid, selenocysteine.

This sequence belongs to the MsrB Met sulfoxide reductase family. Zn(2+) is required as a cofactor. Post-translationally, truncated MSRB1/SEPX1 proteins produced by failed UGA/Sec decoding are ubiquitinated by the CRL2(FEM1C) E3 ubiquitin-protein ligase complex.

Its subcellular location is the cytoplasm. It localises to the nucleus. The protein resides in the cytoskeleton. The enzyme catalyses L-methionyl-[protein] + [thioredoxin]-disulfide + H2O = L-methionyl-(R)-S-oxide-[protein] + [thioredoxin]-dithiol. The catalysed reaction is [thioredoxin]-disulfide + L-methionine + H2O = L-methionine (R)-S-oxide + [thioredoxin]-dithiol. Methionine-sulfoxide reductase that specifically reduces methionine (R)-sulfoxide back to methionine. While in many cases, methionine oxidation is the result of random oxidation following oxidative stress, methionine oxidation is also a post-translational modification that takes place on specific residue. Acts as a regulator of actin assembly by reducing methionine (R)-sulfoxide mediated by MICALs (MICAL1, MICAL2 or MICAL3) on actin, thereby promoting filament repolymerization. Plays a role in innate immunity by reducing oxidized actin, leading to actin repolymerization in macrophages. In Rattus norvegicus (Rat), this protein is Methionine-R-sulfoxide reductase B1 (Msrb1).